Here is a 445-residue protein sequence, read N- to C-terminus: Exodeoxyribonuclease 7 large subunit (445 aa).

This sequence belongs to the XseA family. As to quaternary structure, heterooligomer composed of large and small subunits.

The protein localises to the cytoplasm. The enzyme catalyses Exonucleolytic cleavage in either 5'- to 3'- or 3'- to 5'-direction to yield nucleoside 5'-phosphates.. Its function is as follows. Bidirectionally degrades single-stranded DNA into large acid-insoluble oligonucleotides, which are then degraded further into small acid-soluble oligonucleotides. The sequence is that of Exodeoxyribonuclease 7 large subunit from Delftia acidovorans (strain DSM 14801 / SPH-1).